The following is a 118-amino-acid chain: Ribonuclease P protein component (118 aa).

The protein belongs to the RnpA family. Consists of a catalytic RNA component (M1 or rnpB) and a protein subunit.

It catalyses the reaction Endonucleolytic cleavage of RNA, removing 5'-extranucleotides from tRNA precursor.. Functionally, RNaseP catalyzes the removal of the 5'-leader sequence from pre-tRNA to produce the mature 5'-terminus. It can also cleave other RNA substrates such as 4.5S RNA. The protein component plays an auxiliary but essential role in vivo by binding to the 5'-leader sequence and broadening the substrate specificity of the ribozyme. The protein is Ribonuclease P protein component of Mycoplasma pneumoniae (strain ATCC 29342 / M129 / Subtype 1) (Mycoplasmoides pneumoniae).